The sequence spans 368 residues: Histidinol-phosphate aminotransferase (368 aa).

Position 223 is an N6-(pyridoxal phosphate)lysine (K223).

The protein belongs to the class-II pyridoxal-phosphate-dependent aminotransferase family. Histidinol-phosphate aminotransferase subfamily. Homodimer. Pyridoxal 5'-phosphate serves as cofactor.

The enzyme catalyses L-histidinol phosphate + 2-oxoglutarate = 3-(imidazol-4-yl)-2-oxopropyl phosphate + L-glutamate. The protein operates within amino-acid biosynthesis; L-histidine biosynthesis; L-histidine from 5-phospho-alpha-D-ribose 1-diphosphate: step 7/9. The polypeptide is Histidinol-phosphate aminotransferase (Rhodospirillum rubrum (strain ATCC 11170 / ATH 1.1.1 / DSM 467 / LMG 4362 / NCIMB 8255 / S1)).